The sequence spans 707 residues: Heat shock protein hsp88 (707 aa).

The segment covering 662 to 692 (EAEKAAKKAEEEARKAKEAAEKAAQEGAKDD) has biased composition (basic and acidic residues). The disordered stretch occupies residues 662-707 (EAEKAAKKAEEEARKAKEAAEKAAQEGAKDDEMTDADAPKPVVEEA).

This sequence belongs to the heat shock protein 70 family. As to quaternary structure, binds hsp30 independent of temperature or substrate. In terms of processing, the N-terminus is blocked.

The protein resides in the cytoplasm. The chain is Heat shock protein hsp88 (hsp88) from Neurospora crassa (strain ATCC 24698 / 74-OR23-1A / CBS 708.71 / DSM 1257 / FGSC 987).